The primary structure comprises 121 residues: Large ribosomal subunit protein bL12 (121 aa).

It belongs to the bacterial ribosomal protein bL12 family. As to quaternary structure, homodimer. Part of the ribosomal stalk of the 50S ribosomal subunit. Forms a multimeric L10(L12)X complex, where L10 forms an elongated spine to which 2 to 4 L12 dimers bind in a sequential fashion. Binds GTP-bound translation factors.

Forms part of the ribosomal stalk which helps the ribosome interact with GTP-bound translation factors. Is thus essential for accurate translation. This Ureaplasma urealyticum serovar 10 (strain ATCC 33699 / Western) protein is Large ribosomal subunit protein bL12.